A 764-amino-acid chain; its full sequence is MLHTMQLLLLATIVGMVRSSPYTSYQNQRFAMEPQDQTAVVGARVTLPCRVINKQGTLQWTKDDFGLGTSRDLSGFERYAMVGSDEEGDYSLDIYPVMLDDDARYQCQVSPGPEGQPAIRSTFAGLTVLVPPEAPKITQGDVIYATEDRKVEIECVSVGGKPAAEITWIDGLGNVLTDNIEYTVIPLPDQRRFTAKSVLRLTPKKEHHNTNFSCQAQNTADRTYRSAKIRVEVKYAPKVKVNVMGSLPGGAGGSVGGAGGGSVHMSTGSRIVEHSQVRLECRADANPSDVRYRWFINDEPIIGGQKTEMVIRNVTRKFHDAIVKCEVQNSVGKSEDSETLDISYAPSFRQRPQSMEADVGSVVSLTCEVDSNPQPEIVWIQHPSDRVVGTSTNLTFSVSNETAGRYYCKANVPGYAEISADAYVYLKGSPAIGSQRTQYGLVGDTARIECFASSVPRARHVSWTFNGQEISSESGHDYSILVDAVPGGVKSTLIIRDSQAYHYGKYNCTVVNDYGNDVAEIQLQAKKSVSLLMTIVGGISVVAFLLVLTILVVVYIKCKKRTKLPPADVISEHQITKNGGVSCKLEPGDRTSNYSDLKVDISGGYVPYGDYSTHYSPPPQYLTTCSTKSNGSSTIMQNNHQNQLQLQQQQQQSHHQHHTQTTTLPMTFLTNSSGGSLTGSIIGSREIRQDNGLPSLQSTTASVVSSSPNGSCSNQSTTAATTTTTHVVVPSSMALSVDPRYSAIYGNPYLRSSNSSLLPPPTAV.

Residues 1-19 form the signal peptide; sequence MLHTMQLLLLATIVGMVRS. The Extracellular segment spans residues 20-533; the sequence is SPYTSYQNQR…QAKKSVSLLM (514 aa). Ig-like C2-type domains follow at residues 21–120, 132–230, 237–343, 346–419, and 430–530; these read PYTS…PAIR, PEAP…AKIR, PKVK…LDIS, PSFR…AEIS, and PAIG…KSVS. Cystine bridges form between Cys49-Cys107, Cys155-Cys214, Cys281-Cys325, Cys367-Cys408, and Cys450-Cys508. N-linked (GlcNAc...) asparagine glycosylation is found at Asn211, Asn313, Asn393, Asn400, and Asn507. Residues 534 to 556 form a helical membrane-spanning segment; it reads TIVGGISVVAFLLVLTILVVVYI. The Cytoplasmic segment spans residues 557–764; the sequence is KCKKRTKLPP…SSLLPPPTAV (208 aa). Disordered regions lie at residues 640 to 660 and 691 to 719; these read HQNQ…HHTQ and NGLP…STTA. Over residues 692–701 the composition is skewed to polar residues; the sequence is GLPSLQSTTA. Over residues 702 to 719 the composition is skewed to low complexity; the sequence is SVVSSSPNGSCSNQSTTA.

As to expression, postembryonic expression is strong in the developing optic lobe and in the eye imaginal disk.

Its subcellular location is the membrane. In terms of biological role, required for correct axonal pathway formation in the optic lobe and for programmed cell death in the developing retina. This chain is Irregular chiasm C-roughest protein (rst), found in Drosophila melanogaster (Fruit fly).